The primary structure comprises 71 residues: MNKPVKKQQPKKVIPNFEYARRLNGKKVKIFLRNGEVLDAEVTGVSNYEIMVKVGDRNLLVFKHAIDYIEY.

Residues 15 to 71 (PNFEYARRLNGKKVKIFLRNGEVLDAEVTGVSNYEIMVKVGDRNLLVFKHAIDYIEY) enclose the Sm domain.

This is an uncharacterized protein from Methanocaldococcus jannaschii (strain ATCC 43067 / DSM 2661 / JAL-1 / JCM 10045 / NBRC 100440) (Methanococcus jannaschii).